Reading from the N-terminus, the 516-residue chain is Anaerobic nitric oxide reductase transcription regulator NorR (516 aa).

Residue D57 is modified to 4-aspartylphosphate. Positions 187-416 (IIGLSAPMLQ…LEHAIHRAVV (230 aa)) constitute a Sigma-54 factor interaction domain. Residues 215–222 (GETGTGKE) and 278–287 (ADNGTLFLDE) contribute to the ATP site. Positions 482 to 501 (WAATARALELDVANLHRLAK) form a DNA-binding region, H-T-H motif.

It functions in the pathway nitrogen metabolism; nitric oxide reduction. In terms of biological role, required for the expression of anaerobic nitric oxide (NO) reductase, acts as a transcriptional activator for at least the norVW operon. Activation also requires sigma-54. The chain is Anaerobic nitric oxide reductase transcription regulator NorR from Klebsiella pneumoniae (strain 342).